The chain runs to 502 residues: L-arabinose isomerase (502 aa).

Mn(2+) contacts are provided by glutamate 307, glutamate 334, histidine 351, and histidine 450.

This sequence belongs to the arabinose isomerase family. The cofactor is Mn(2+).

It carries out the reaction beta-L-arabinopyranose = L-ribulose. It functions in the pathway carbohydrate degradation; L-arabinose degradation via L-ribulose; D-xylulose 5-phosphate from L-arabinose (bacterial route): step 1/3. In terms of biological role, catalyzes the conversion of L-arabinose to L-ribulose. The sequence is that of L-arabinose isomerase from Nocardioides sp. (strain ATCC BAA-499 / JS614).